The primary structure comprises 397 residues: Alanine racemase, biosynthetic (397 aa).

The active-site Proton acceptor; specific for D-alanine is the Lys42. At Lys42 the chain carries N6-(pyridoxal phosphate)lysine. Arg136 is a binding site for substrate. Catalysis depends on Tyr257, which acts as the Proton acceptor; specific for L-alanine. Substrate is bound at residue Met305. Residues 373-397 (ANRPTEAMSNPSRAKSRPMDKQALI) are disordered.

Belongs to the alanine racemase family. Requires pyridoxal 5'-phosphate as cofactor.

The enzyme catalyses L-alanine = D-alanine. It participates in amino-acid biosynthesis; D-alanine biosynthesis; D-alanine from L-alanine: step 1/1. It functions in the pathway cell wall biogenesis; peptidoglycan biosynthesis. Functionally, catalyzes the interconversion of L-alanine and D-alanine. Provides the D-alanine required for cell wall biosynthesis. The protein is Alanine racemase, biosynthetic (alr) of Mesorhizobium japonicum (strain LMG 29417 / CECT 9101 / MAFF 303099) (Mesorhizobium loti (strain MAFF 303099)).